The chain runs to 706 residues: Termination factor NPH-I homolog (706 aa).

The Helicase ATP-binding domain occupies 62–227; sequence IGQGENTRGL…VPCFNMLSGR (166 aa). An ATP-binding site is contributed by 75–82; sequence HQMGMGKT. The DEAH box motif lies at 168–171; it reads DEAH. One can recognise a Helicase C-terminal domain in the interval 417-599; the sequence is QCLQPLKVLE…HLNSAFRDLL (183 aa).

It belongs to the DEAD box helicase family. DEAH subfamily. In terms of assembly, part of the viral DNA-directed RNA polymerase that consists of 8 polII-like subunits (RPB1, RPB2, RPB3, RPB5, RPB6, RPB7, RPB9, RPB10), a capping enzyme and a termination factor.

It is found in the virion. Functionally, putative DNA-dependent ATPase required for providing the needed energy to achieve the termination of early transcripts. The sequence is that of Termination factor NPH-I homolog from African swine fever virus (isolate Warthog/Namibia/Wart80/1980) (ASFV).